The sequence spans 451 residues: Serine--tRNA ligase (451 aa).

Position 247–249 (T247–E249) interacts with L-serine. ATP contacts are provided by residues R278 to E280 and V294. Residue E301 coordinates L-serine. E365–S368 is a binding site for ATP. Residue T400 participates in L-serine binding.

Belongs to the class-II aminoacyl-tRNA synthetase family. Type-1 seryl-tRNA synthetase subfamily. Homodimer. The tRNA molecule binds across the dimer.

Its subcellular location is the cytoplasm. The catalysed reaction is tRNA(Ser) + L-serine + ATP = L-seryl-tRNA(Ser) + AMP + diphosphate + H(+). The enzyme catalyses tRNA(Sec) + L-serine + ATP = L-seryl-tRNA(Sec) + AMP + diphosphate + H(+). It functions in the pathway aminoacyl-tRNA biosynthesis; selenocysteinyl-tRNA(Sec) biosynthesis; L-seryl-tRNA(Sec) from L-serine and tRNA(Sec): step 1/1. Its function is as follows. Catalyzes the attachment of serine to tRNA(Ser). Is also able to aminoacylate tRNA(Sec) with serine, to form the misacylated tRNA L-seryl-tRNA(Sec), which will be further converted into selenocysteinyl-tRNA(Sec). The polypeptide is Serine--tRNA ligase (Pyrobaculum aerophilum (strain ATCC 51768 / DSM 7523 / JCM 9630 / CIP 104966 / NBRC 100827 / IM2)).